Here is a 2034-residue protein sequence, read N- to C-terminus: Host cell factor 1 (2034 aa).

A2 is modified (N-acetylalanine). S6 is subject to Phosphoserine. Kelch repeat units lie at residues 44–89, 93–140, 148–194, 217–265, and 266–313; these read LIVV…GFVC, RLLV…RLGH, KCYL…ITYG, KLVI…TIGN, and KMYV…LMDT. Glycyl lysine isopeptide (Lys-Gly) (interchain with G-Cter in ubiquitin) cross-links involve residues K105, K163, and K244. K282 is covalently cross-linked (Glycyl lysine isopeptide (Lys-Gly) (interchain with G-Cter in SUMO2)). K288 carries the N6-acetyllysine modification. K363 participates in a covalent cross-link: Glycyl lysine isopeptide (Lys-Gly) (interchain with G-Cter in ubiquitin). One can recognise a Fibronectin type-III 1 domain in the interval 366 to 469; that stretch reads PPARVQLVRA…TIQVLPTVPG (104 aa). The tract at residues 407–434 is disordered; the sequence is ATATSPTPNPVPSVPANPPKSPAPAAAA. Residue S411 is modified to Phosphoserine. Over residues 413 to 428 the composition is skewed to pro residues; it reads TPNPVPSVPANPPKSP. Residues 500–550 form a required for interaction with OGT region; sequence LVTMRPASQAGKAPVTVTSLPASVRMVVPTQSAQGTVIGSNPQMSGMAALA. An omega-N-methylarginine mark is found at R504 and R524. S598, S666, and S669 each carry phosphoserine. Residues 610–722 form an interaction with SIN3A region; it reads LKTAAAQVGT…KGPLPAGTIL (113 aa). The interaction with ZBTB17 stretch occupies residues 750–902; the sequence is ILGISSVSPS…SLAGAGAHST (153 aa). The residue at position 813 (K813) is an N6-acetyllysine. Positions 813-912 are interaction with GABP2; it reads KIITAVPKIA…SASLATPITT (100 aa). HCF repeat repeat units follow at residues 1010–1035, 1072–1097, and 1101–1126; these read TLVC…TVVA, VRVC…ATSN, and QHGC…AMSS. One copy of the HCF repeat 4; degenerate repeat lies at 1156-1182; sequence RAQGTVKPPCQTQQTNMTSTTMTVQAT. Phosphoserine is present on residues S1204 and S1223. Disordered regions lie at residues 1221-1241, 1302-1374, 1444-1477, and 1491-1525; these read GPSS…TYTT, PCET…TTST, TVTS…NITS, and RAVT…QLPP. HCF repeat repeat units lie at residues 1295 to 1320 and 1323 to 1348; these read TQVC…SNAG and QRVC…ATSN. Over residues 1308-1321 the composition is skewed to low complexity; sequence TGTTNTATTSNAGS. The stretch at 1358–1383 is one HCF repeat 7; degenerate repeat; sequence QQPASGHPCETHQTTSTGTTMSVSVG. The HCF repeat 8 repeat unit spans residues 1423 to 1448; the sequence is QRVCSNPPCETHETGTTHTATTVTSN. The span at 1491-1501 shows a compositional bias: low complexity; sequence RAVTTVTQSTP. T1500 bears the Phosphothreonine mark. The segment covering 1502-1511 has biased composition (pro residues); sequence VPGPSVPPPE. Residues S1506 and S1516 each carry the phosphoserine modification. The stretch at 1693–1723 forms a coiled coil; sequence IVLTQQELAALVQQQQQLQEAQAQAQQQHHL. S1782 carries the phosphoserine modification. Fibronectin type-III domains are found at residues 1808 to 1899 and 1901 to 2017; these read LPPP…TCLP and FPGA…TSKD. Residues K1818 and K1819 each participate in a glycyl lysine isopeptide (Lys-Gly) (interchain with G-Cter in ubiquitin) cross-link. S1849 carries the phosphoserine modification. The interval 2005-2034 is disordered; sequence ATQVRWLQETSKDSSGTKPASKRPMSSPEM. Position 2016 is an N6-acetyllysine (K2016).

Composed predominantly of six polypeptides ranging from 110 to 150 kDa and a minor 300 kDa polypeptide. The majority of N- and C-terminal cleavage products remain tightly, albeit non-covalently, associated. Interacts with POU2F1, CREB3, ZBTB17, EGR2, E2F4, CREBZF, SP1, GABP2, Sin3 HDAC complex (SIN3A, HDAC1, HDAC2, SUDS3), SAP30, SIN3B and FHL2. Component of a MLL1 complex, composed of at least the core components KMT2A/MLL1, ASH2L, HCFC1, WDR5 and RBBP5, as well as the facultative components BACC1, CHD8, DPY30, E2F6, HCFC2, HSP70, INO80C, KANSL1, LAS1L, MAX, MCRS1, MEN1, MGA, KAT8, PELP1, PHF20, PRP31, RING2, RUVBL1, RUVBL2, SENP3, TAF1, TAF4, TAF6, TAF7, TAF9 and TEX10. Component of a THAP1/THAP3-HCFC1-OGT complex that is required for the regulation of the transcriptional activity of RRM1. Interacts directly with THAP3 (via its HBM). Interacts (via the Kelch-repeat domain) with THAP1 (via the HBM); the interaction recruits HCHC1 to the RRM1. Interacts with THAP7 and THAP11 (via the HMB). Interacts directly with OGT; the interaction, which requires the HCFC1 cleavage site domain, glycosylates and promotes the proteolytic processing of HCFC1, retains OGT in the nucleus and impacts the expression of herpes simplex virus immediate early viral genes. Component of the SET1 complex, at least composed of the catalytic subunit (SETD1A or SETD1B), WDR5, WDR82, RBBP5, ASH2L, CXXC1, HCFC1 and DPY30. Component of the NSL complex at least composed of MOF/KAT8, KANSL1, KANSL2, KANSL3, MCRS1, PHF20, OGT1/OGT, WDR5 and HCFC1. Component of a complex at least composed of ZNF335, HCFC1, CCAR2, EMSY, MKI67, RBBP5, ASH2L and WDR5; the complex is formed as a result of interactions between components of a nuclear receptor-mediated transcription complex and a histone methylation complex. Within the complex interacts with ZNF335. Interacts with TET2 and TET3. Interacts with HCFC1R1. Interacts with THAP11. Interacts (via Kelch domain) with KMT2E/MLL5 isoform 3 (via HBM motif). Interacts with E2F1. Accessory scaffold component of the polycomb repressive deubiquitinase (PR-DUB) complex, at least composed of BAP1, one of ASXL1, ASXL2 or (probably) ASXL3 and one of MBD5 or MBD6; the PR-DUB core associates with a number of accessory proteins, including FOXK1, FOXK2, KDM1B, HCFC1, YY1 and OGT. Interacts with YY1 (via Gly-rich region); the interaction is direct. Interacts with BAP1 (via HBM-like motif). In terms of processing, proteolytically cleaved at one or several PPCE--THET sites within the HCF repeats. Further cleavage of the primary N- and C-terminal chains results in a 'trimming' and accumulation of the smaller chains. Cleavage is promoted by O-glycosylation. Post-translationally, O-glycosylated. GlcNAcylation by OGT promotes proteolytic processing. Ubiquitinated. Lys-1818 and Lys-1819 are ubiquitinated both via 'Lys-48'- and 'Lys-63'-linked polyubiquitin chains. BAP1 mediated deubiquitination of 'Lys-48'-linked polyubiquitin chains; deubiquitination by BAP1 does not seem to stabilize the protein.

Its subcellular location is the cytoplasm. It is found in the nucleus. Functionally, transcriptional coregulator. Serves as a scaffold protein, bridging interactions between transcription factors, including THAP11 and ZNF143, and transcriptional coregulators. Involved in control of the cell cycle. Also antagonizes transactivation by ZBTB17 and GABP2; represses ZBTB17 activation of the p15(INK4b) promoter and inhibits its ability to recruit p300. Coactivator for EGR2 and GABP2. Tethers the chromatin modifying Set1/Ash2 histone H3 'Lys-4' methyltransferase (H3K4me) and Sin3 histone deacetylase (HDAC) complexes (involved in the activation and repression of transcription, respectively) together. Component of a THAP1/THAP3-HCFC1-OGT complex that is required for the regulation of the transcriptional activity of RRM1. As part of the NSL complex it may be involved in acetylation of nucleosomal histone H4 on several lysine residues. Recruits KMT2E/MLL5 to E2F1 responsive promoters promoting transcriptional activation and thereby facilitates G1 to S phase transition. Modulates expression of homeobox protein PDX1, perhaps acting in concert with transcription factor E2F1, thereby regulating pancreatic beta-cell growth and glucose-stimulated insulin secretion. May negatively modulate transcriptional activity of FOXO3. The sequence is that of Host cell factor 1 from Rattus norvegicus (Rat).